The following is a 274-amino-acid chain: Tropomyosin (274 aa).

Positions 1-35 (MKLEKDNAMDRADTLEQQNKEANNRAEKSEEEVHN) are enriched in basic and acidic residues. A disordered region spans residues 1-45 (MKLEKDNAMDRADTLEQQNKEANNRAEKSEEEVHNLQKRMQQLEN). Residues 1–274 (MKLEKDNAMD…DQTFSELSGY (274 aa)) adopt a coiled-coil conformation.

Belongs to the tropomyosin family. As to quaternary structure, homodimer.

Tropomyosin, in association with the troponin complex, plays a central role in the calcium dependent regulation of muscle contraction. In Metapenaeus ensis (Greasyback shrimp), this protein is Tropomyosin.